The chain runs to 194 residues: Large ribosomal subunit protein eL15 (194 aa).

The disordered stretch occupies residues 164-194; sequence SAGKKGRGLRNKGKGAEKIRPSIRANEGKGK. Positions 167–176 are enriched in basic residues; sequence KKGRGLRNKG. Positions 177-194 are enriched in basic and acidic residues; it reads KGAEKIRPSIRANEGKGK.

Belongs to the eukaryotic ribosomal protein eL15 family.

The sequence is that of Large ribosomal subunit protein eL15 (rpl15e) from Pyrococcus abyssi (strain GE5 / Orsay).